The primary structure comprises 283 residues: GDP-polyphosphate phosphotransferase (283 aa).

It belongs to the polyphosphate kinase 2 (PPK2) family. Class I subfamily.

It catalyses the reaction [phosphate](n) + GTP = [phosphate](n+1) + GDP. Its function is as follows. Uses inorganic polyphosphate (polyP) as a donor to convert GDP to GTP. The chain is GDP-polyphosphate phosphotransferase from Mycolicibacterium smegmatis (strain ATCC 700084 / mc(2)155) (Mycobacterium smegmatis).